Reading from the N-terminus, the 302-residue chain is Segregation and condensation protein A (302 aa).

Belongs to the ScpA family. Component of a cohesin-like complex composed of ScpA, ScpB and the Smc homodimer, in which ScpA and ScpB bind to the head domain of Smc. The presence of the three proteins is required for the association of the complex with DNA.

It is found in the cytoplasm. In terms of biological role, participates in chromosomal partition during cell division. May act via the formation of a condensin-like complex containing Smc and ScpB that pull DNA away from mid-cell into both cell halves. This is Segregation and condensation protein A from Xylella fastidiosa (strain Temecula1 / ATCC 700964).